A 363-amino-acid chain; its full sequence is Phosphate acyltransferase (363 aa).

Residues 326–363 form a disordered region; the sequence is ADSHPSKVNAGENAPPLASASNPSPEALPVGSLDRVEG. Positions 337–354 are enriched in low complexity; the sequence is ENAPPLASASNPSPEALP.

Belongs to the PlsX family. As to quaternary structure, homodimer. Probably interacts with PlsY.

The protein localises to the cytoplasm. The enzyme catalyses a fatty acyl-[ACP] + phosphate = an acyl phosphate + holo-[ACP]. Its pathway is lipid metabolism; phospholipid metabolism. In terms of biological role, catalyzes the reversible formation of acyl-phosphate (acyl-PO(4)) from acyl-[acyl-carrier-protein] (acyl-ACP). This enzyme utilizes acyl-ACP as fatty acyl donor, but not acyl-CoA. This is Phosphate acyltransferase from Synechococcus sp. (strain JA-3-3Ab) (Cyanobacteria bacterium Yellowstone A-Prime).